Consider the following 794-residue polypeptide: Inactive zinc metalloprotease C354.09c (794 aa).

Positions 1-56 are disordered; it reads MTDEKHVYVPPPKDPPSYEEVALHSALNNSAPPNDGEQNETSMEEMEIIEPPSEDS. The helical transmembrane segment at 91 to 111 threads the bilayer; that stretch reads IPFQFLYLAVIATVIILASYY.

This sequence belongs to the peptidase M28 family. M28B subfamily.

Its subcellular location is the membrane. In Schizosaccharomyces pombe (strain 972 / ATCC 24843) (Fission yeast), this protein is Inactive zinc metalloprotease C354.09c.